The following is a 393-amino-acid chain: Elongation factor Tu (393 aa).

A tr-type G domain is found at 10–203 (KPHVNIGTIG…AVDEFIPEPL (194 aa)). The tract at residues 19-26 (GHVDHGKT) is G1. 19 to 26 (GHVDHGKT) is a GTP binding site. Residue T26 participates in Mg(2+) binding. The tract at residues 60 to 64 (GITIS) is G2. The interval 81 to 84 (DCPG) is G3. GTP contacts are provided by residues 81–85 (DCPGH) and 136–139 (NKVD). The interval 136-139 (NKVD) is G4. The segment at 173–175 (SAL) is G5.

It belongs to the TRAFAC class translation factor GTPase superfamily. Classic translation factor GTPase family. EF-Tu/EF-1A subfamily. Monomer.

The protein resides in the cytoplasm. It carries out the reaction GTP + H2O = GDP + phosphate + H(+). Functionally, GTP hydrolase that promotes the GTP-dependent binding of aminoacyl-tRNA to the A-site of ribosomes during protein biosynthesis. The sequence is that of Elongation factor Tu from Chlorobium phaeobacteroides (strain DSM 266 / SMG 266 / 2430).